A 1107-amino-acid polypeptide reads, in one-letter code: Protein translocase subunit SecA (1107 aa).

Residues Q169, 187–191 (GEGKT), and D688 each bind ATP. Residues 1036-1066 (RHAAEQRTDMSKYRTQKDDIEAQQKAQRDAA) show a composition bias toward basic and acidic residues. Residues 1036–1107 (RHAAEQRTDM…KFKQCHGRNL (72 aa)) are disordered. Zn(2+)-binding residues include C1091, C1093, C1102, and H1103. A compositionally biased stretch (basic residues) spans 1097–1107 (KKFKQCHGRNL).

The protein belongs to the SecA family. Monomer and homodimer. Part of the essential Sec protein translocation apparatus which comprises SecA, SecYEG and auxiliary proteins SecDF. Other proteins may also be involved. Zn(2+) serves as cofactor.

The protein localises to the cell inner membrane. It is found in the cytoplasm. The enzyme catalyses ATP + H2O + cellular proteinSide 1 = ADP + phosphate + cellular proteinSide 2.. In terms of biological role, part of the Sec protein translocase complex. Interacts with the SecYEG preprotein conducting channel. Has a central role in coupling the hydrolysis of ATP to the transfer of proteins into and across the cell membrane, serving as an ATP-driven molecular motor driving the stepwise translocation of polypeptide chains across the membrane. The protein is Protein translocase subunit SecA of Porphyromonas gingivalis (strain ATCC BAA-308 / W83).